We begin with the raw amino-acid sequence, 235 residues long: MNKEEQYLLFALSAPMEILNQGCKPAHDSPKMYTGIKEFELSSSWGINNRDDLIQTIYQMTDDGHANDLAGLYLTWHRSSPEEWKALIAGGSERGLIYTQFVAQTAMCCGEGGIKAWDYVRMGFLSRVGVLNKWLTEEESLWLQSRVYVRAHHYYHSWMHYFSAYSLGRLYWQSSQCEDNTSLREALTLYKYDSAGSRMFEELAAGSDRFYATLPWQPLTVQSECPVTLKDVSDL.

It to E.coli YbeR.

This is an uncharacterized protein from Escherichia coli (strain K12).